The primary structure comprises 452 residues: Tripartite motif-containing protein 49C (452 aa).

The segment at 15–56 (CPLCMNYFIDPVTIDCGHSFCRPCFYLNWQDIPFLVQCSECT) adopts an RING-type zinc-finger fold. The segment at 88–129 (SEEQMCGTHRETKKIFCEVDRSLLCLLCSSSQEHRYHRHRPI) adopts a B box-type zinc-finger fold. Zn(2+)-binding residues include Cys-93, His-96, Cys-115, and His-121. The B30.2/SPRY domain maps to 269–452 (ELSAGPITGL…LRPIFCCIHF (184 aa)).

This chain is Tripartite motif-containing protein 49C (TRIM49C), found in Homo sapiens (Human).